A 273-amino-acid chain; its full sequence is Dermonecrotic toxin LapSicTox-alphaII1 (273 aa).

The active site involves histidine 5. 2 residues coordinate Mg(2+): glutamate 25 and aspartate 27. Residue histidine 41 is the Nucleophile of the active site. 2 disulfide bridges follow: cysteine 45–cysteine 51 and cysteine 47–cysteine 191. Residue aspartate 85 coordinates Mg(2+).

The protein belongs to the arthropod phospholipase D family. Class II subfamily. Requires Mg(2+) as cofactor. As to expression, expressed by the venom gland.

It localises to the secreted. The enzyme catalyses an N-(acyl)-sphingosylphosphocholine = an N-(acyl)-sphingosyl-1,3-cyclic phosphate + choline. It catalyses the reaction an N-(acyl)-sphingosylphosphoethanolamine = an N-(acyl)-sphingosyl-1,3-cyclic phosphate + ethanolamine. It carries out the reaction a 1-acyl-sn-glycero-3-phosphocholine = a 1-acyl-sn-glycero-2,3-cyclic phosphate + choline. The catalysed reaction is a 1-acyl-sn-glycero-3-phosphoethanolamine = a 1-acyl-sn-glycero-2,3-cyclic phosphate + ethanolamine. In terms of biological role, dermonecrotic toxins cleave the phosphodiester linkage between the phosphate and headgroup of certain phospholipids (sphingolipid and lysolipid substrates), forming an alcohol (often choline) and a cyclic phosphate. This toxin acts on sphingomyelin (SM). It may also act on ceramide phosphoethanolamine (CPE), lysophosphatidylcholine (LPC) and lysophosphatidylethanolamine (LPE), but not on lysophosphatidylserine (LPS), and lysophosphatidylglycerol (LPG). It acts by transphosphatidylation, releasing exclusively cyclic phosphate products as second products. Induces dermonecrosis, hemolysis, increased vascular permeability, edema, inflammatory response, and platelet aggregation. This is Dermonecrotic toxin LapSicTox-alphaII1 from Loxosceles apachea (Apache recluse spider).